Here is a 513-residue protein sequence, read N- to C-terminus: ATP synthase subunit alpha (513 aa).

G169–T176 contacts ATP.

The protein belongs to the ATPase alpha/beta chains family. In terms of assembly, F-type ATPases have 2 components, CF(1) - the catalytic core - and CF(0) - the membrane proton channel. CF(1) has five subunits: alpha(3), beta(3), gamma(1), delta(1), epsilon(1). CF(0) has three main subunits: a(1), b(2) and c(9-12). The alpha and beta chains form an alternating ring which encloses part of the gamma chain. CF(1) is attached to CF(0) by a central stalk formed by the gamma and epsilon chains, while a peripheral stalk is formed by the delta and b chains.

It is found in the cell inner membrane. The catalysed reaction is ATP + H2O + 4 H(+)(in) = ADP + phosphate + 5 H(+)(out). Functionally, produces ATP from ADP in the presence of a proton gradient across the membrane. The alpha chain is a regulatory subunit. This chain is ATP synthase subunit alpha, found in Shewanella sp. (strain MR-4).